The sequence spans 483 residues: Serine protease HTRA4 (483 aa).

The first 30 residues, 1 to 30 (MSFQRLWAVRTQFLLLWLLLPAVPVPWAEA), serve as a signal peptide directing secretion. The IGFBP N-terminal domain occupies 35-113 (VSLPCPDACD…GAWLGTCGCA (79 aa)). 6 disulfides stabilise this stretch: Cys-39-Cys-65, Cys-43-Cys-67, Cys-48-Cys-68, Cys-54-Cys-71, Cys-79-Cys-93, and Cys-87-Cys-110. The tract at residues 208 to 368 (GSGFIVSEDG…IPSDRIRQFL (161 aa)) is serine protease. Residues His-224, Asp-254, and Ser-332 each act as charge relay system in the active site. The PDZ domain maps to 379–471 (KAPLQKKYLG…LSIIVLRGSQ (93 aa)).

The protein belongs to the peptidase S1C family.

The protein resides in the secreted. Functionally, serine protease. In Mus musculus (Mouse), this protein is Serine protease HTRA4 (Htra4).